A 155-amino-acid polypeptide reads, in one-letter code: SsrA-binding protein (155 aa).

Belongs to the SmpB family.

It is found in the cytoplasm. In terms of biological role, required for rescue of stalled ribosomes mediated by trans-translation. Binds to transfer-messenger RNA (tmRNA), required for stable association of tmRNA with ribosomes. tmRNA and SmpB together mimic tRNA shape, replacing the anticodon stem-loop with SmpB. tmRNA is encoded by the ssrA gene; the 2 termini fold to resemble tRNA(Ala) and it encodes a 'tag peptide', a short internal open reading frame. During trans-translation Ala-aminoacylated tmRNA acts like a tRNA, entering the A-site of stalled ribosomes, displacing the stalled mRNA. The ribosome then switches to translate the ORF on the tmRNA; the nascent peptide is terminated with the 'tag peptide' encoded by the tmRNA and targeted for degradation. The ribosome is freed to recommence translation, which seems to be the essential function of trans-translation. This is SsrA-binding protein from Streptococcus suis (strain 98HAH33).